A 108-amino-acid chain; its full sequence is C-C motif chemokine 19 (108 aa).

The first 25 residues, 1–25 (MAPRVTPLLAFSLLVLWTFPAPTLG), serve as a signal peptide directing secretion. 2 disulfides stabilise this stretch: C33/C59 and C34/C75. N100 carries an N-linked (GlcNAc...) asparagine glycan.

This sequence belongs to the intercrine beta (chemokine CC) family. Interacts with TNFAIP6 (via Link domain). Highly expressed by dendritic cells in mesenteric and peripheral lymph nodes. Significant expression in spleen (T cell zone or periarteriolar lymphatic sheath) and Peyer patches. Low expression in thymus.

It is found in the secreted. Functionally, strongly chemotactic for naive (L-selectinhi) CD4 T-cells and for CD8 T-cells and weakly attractive for resting B-cells and memory (L-selectinlo) CD4 T-cells. May play a role in promoting encounters between recirculating T-cells and dendritic cells and in the migration of activated B-cells into the T-zone of secondary lymphoid tissues. Binds to chemokine receptor CCR7. Binds to atypical chemokine receptor ACKR4 and mediates the recruitment of beta-arrestin (ARRB1/2) to ACKR4. This Mus musculus (Mouse) protein is C-C motif chemokine 19 (Ccl19).